We begin with the raw amino-acid sequence, 201 residues long: Proteasome subunit beta type-2 (201 aa).

An N-acetylmethionine modification is found at methionine 1.

The protein belongs to the peptidase T1B family. In terms of assembly, the 26S proteasome consists of a 20S proteasome core and two 19S regulatory subunits. The 20S proteasome core is a barrel-shaped complex made of 28 subunits that are arranged in four stacked rings. The two outer rings are each formed by seven alpha subunits, and the two inner rings are formed by seven beta subunits. The proteolytic activity is exerted by three beta-subunits PSMB5, PSMB6 and PSMB7.

The protein localises to the cytoplasm. It is found in the nucleus. In terms of biological role, non-catalytic component of the 20S core proteasome complex involved in the proteolytic degradation of most intracellular proteins. This complex plays numerous essential roles within the cell by associating with different regulatory particles. Associated with two 19S regulatory particles, forms the 26S proteasome and thus participates in the ATP-dependent degradation of ubiquitinated proteins. The 26S proteasome plays a key role in the maintenance of protein homeostasis by removing misfolded or damaged proteins that could impair cellular functions, and by removing proteins whose functions are no longer required. Associated with the PA200 or PA28, the 20S proteasome mediates ubiquitin-independent protein degradation. This type of proteolysis is required in several pathways including spermatogenesis (20S-PA200 complex) or generation of a subset of MHC class I-presented antigenic peptides (20S-PA28 complex). The protein is Proteasome subunit beta type-2 (PSMB2) of Bos taurus (Bovine).